A 179-amino-acid chain; its full sequence is Large ribosomal subunit protein uL6 (179 aa).

It belongs to the universal ribosomal protein uL6 family. As to quaternary structure, part of the 50S ribosomal subunit.

This protein binds to the 23S rRNA, and is important in its secondary structure. It is located near the subunit interface in the base of the L7/L12 stalk, and near the tRNA binding site of the peptidyltransferase center. This chain is Large ribosomal subunit protein uL6, found in Leptospira biflexa serovar Patoc (strain Patoc 1 / ATCC 23582 / Paris).